Consider the following 830-residue polypeptide: Periplasmic nitrate reductase (830 aa).

Residues 1–31 constitute a signal peptide (tat-type signal); that stretch reads MKLSRRDFMKANAAVAAAAAAGMTIPTVAKA. Positions 39-95 constitute a 4Fe-4S Mo/W bis-MGD-type domain; the sequence is IKWDKAPCRFCGTGCGVLVGTQNGRIVASQGDPDSPVNRGLNCIKGYFLPKIMYGKD. [4Fe-4S] cluster contacts are provided by Cys-46, Cys-49, Cys-53, and Cys-81. Residues Lys-83, Gln-150, Asn-175, Cys-179, 212-219, 243-247, 262-264, Met-372, Gln-376, Asn-482, 508-509, Lys-531, Asp-558, and 718-727 each bind Mo-bis(molybdopterin guanine dinucleotide); these read WGSNMAEM, STYEH, QTD, SD, and TGRVLEHWHT. Residue Phe-794 coordinates substrate. Residues Asn-802 and Lys-819 each contribute to the Mo-bis(molybdopterin guanine dinucleotide) site.

The protein belongs to the prokaryotic molybdopterin-containing oxidoreductase family. NasA/NapA/NarB subfamily. Component of the periplasmic nitrate reductase NapAB complex composed of NapA and NapB. The cofactor is [4Fe-4S] cluster. It depends on Mo-bis(molybdopterin guanine dinucleotide) as a cofactor. In terms of processing, predicted to be exported by the Tat system. The position of the signal peptide cleavage has not been experimentally proven.

Its subcellular location is the periplasm. It catalyses the reaction 2 Fe(II)-[cytochrome] + nitrate + 2 H(+) = 2 Fe(III)-[cytochrome] + nitrite + H2O. Its function is as follows. Catalytic subunit of the periplasmic nitrate reductase complex NapAB. Receives electrons from NapB and catalyzes the reduction of nitrate to nitrite. This chain is Periplasmic nitrate reductase, found in Yersinia pseudotuberculosis serotype IB (strain PB1/+).